Here is a 252-residue protein sequence, read N- to C-terminus: Phosphomannomutase (252 aa).

The active-site Nucleophile is Asp-13. Residues Asp-13 and Asp-15 each coordinate Mg(2+). Asp-15 serves as the catalytic Proton donor/acceptor. Alpha-D-mannose 1-phosphate contacts are provided by Arg-22, Arg-124, Arg-135, Arg-142, Ser-180, and Asp-182. Positions 208, 220, and 225 each coordinate Mg(2+).

It belongs to the eukaryotic PMM family. In terms of assembly, homodimer. Mg(2+) is required as a cofactor. In terms of tissue distribution, expressed in roots, leaves, stems and flowers.

The protein resides in the cytoplasm. It carries out the reaction alpha-D-mannose 1-phosphate = D-mannose 6-phosphate. It functions in the pathway nucleotide-sugar biosynthesis; GDP-alpha-D-mannose biosynthesis; alpha-D-mannose 1-phosphate from D-fructose 6-phosphate: step 2/2. In terms of biological role, catalyzes the interconversion of mannose-6-phosphate to mannose-1-phosphate, the precursor for the synthesis of GDP-mannose. GDP-mannose is an essential sugar nucleotide for the synthesis of D-mannose-containing cell wall polysaccharides (galactomannans and glucomannans), glycolipids, glycoproteins and the antioxidant L-ascorbate. Involved in the biosynthesis of ascorbate and polysaccharides in response to abiotic stress during seed germination. The sequence is that of Phosphomannomutase from Dendrobium officinale (Orchid).